The following is a 234-amino-acid chain: NAD-dependent protein deacylase (234 aa).

Positions 1-234 constitute a Deacetylase sirtuin-type domain; it reads MKNLVILSGA…IEMASQEMLK (234 aa). 9-28 contacts NAD(+); the sequence is GAGISAESGIKTFRDAGGLW. Tyr53 and Arg56 together coordinate substrate. Position 86-89 (86-89) interacts with NAD(+); the sequence is QNVD. The active-site Proton acceptor is the His104. NAD(+) contacts are provided by residues 169 to 171 and Met217; that span reads GTS.

This sequence belongs to the sirtuin family. Class III subfamily.

Its subcellular location is the cytoplasm. It carries out the reaction N(6)-acetyl-L-lysyl-[protein] + NAD(+) + H2O = 2''-O-acetyl-ADP-D-ribose + nicotinamide + L-lysyl-[protein]. The enzyme catalyses N(6)-succinyl-L-lysyl-[protein] + NAD(+) + H2O = 2''-O-succinyl-ADP-D-ribose + nicotinamide + L-lysyl-[protein]. Its function is as follows. NAD-dependent lysine deacetylase and desuccinylase that specifically removes acetyl and succinyl groups on target proteins. Modulates the activities of several proteins which are inactive in their acylated form. This is NAD-dependent protein deacylase from Helicobacter pylori (strain J99 / ATCC 700824) (Campylobacter pylori J99).